Reading from the N-terminus, the 641-residue chain is Probable potassium transport system protein Kup (641 aa).

The next 12 membrane-spanning stretches (helical) occupy residues 29–49 (ISLA…LYAI), 66–86 (ILGV…LKYL), 119–139 (WVLV…AMIT), 156–176 (PAFA…LFLF), 185–205 (GALF…LGII), 231–251 (LHGF…EALY), 266–286 (WVLF…AFLL), 298–318 (ALVP…ATVI), 356–376 (IYVP…VLGF), 384–404 (AAYG…FFFV), 415–435 (VLWA…GASM), and 438–458 (LFHG…LMNT).

The protein belongs to the HAK/KUP transporter (TC 2.A.72) family.

The protein resides in the cell inner membrane. The enzyme catalyses K(+)(in) + H(+)(in) = K(+)(out) + H(+)(out). Transport of potassium into the cell. Likely operates as a K(+):H(+) symporter. This Chlorobium phaeovibrioides (strain DSM 265 / 1930) (Prosthecochloris vibrioformis (strain DSM 265)) protein is Probable potassium transport system protein Kup.